The following is a 508-amino-acid chain: ATP synthase subunit alpha, mitochondrial (508 aa).

171 to 178 lines the ATP pocket; sequence GDRQTGKT.

The protein belongs to the ATPase alpha/beta chains family. F-type ATPases have 2 components, CF(1) - the catalytic core - and CF(0) - the membrane proton channel. CF(1) has five subunits: alpha(3), beta(3), gamma(1), delta(1), epsilon(1). CF(0) has three main subunits: a, b and c.

The protein localises to the mitochondrion. The protein resides in the mitochondrion inner membrane. In terms of biological role, mitochondrial membrane ATP synthase (F(1)F(0) ATP synthase or Complex V) produces ATP from ADP in the presence of a proton gradient across the membrane which is generated by electron transport complexes of the respiratory chain. F-type ATPases consist of two structural domains, F(1) - containing the extramembraneous catalytic core, and F(0) - containing the membrane proton channel, linked together by a central stalk and a peripheral stalk. During catalysis, ATP synthesis in the catalytic domain of F(1) is coupled via a rotary mechanism of the central stalk subunits to proton translocation. Subunits alpha and beta form the catalytic core in F(1). Rotation of the central stalk against the surrounding alpha(3)beta(3) subunits leads to hydrolysis of ATP in three separate catalytic sites on the beta subunits. Subunit alpha does not bear the catalytic high-affinity ATP-binding sites. This is ATP synthase subunit alpha, mitochondrial (ATPA) from Phaseolus vulgaris (Kidney bean).